The following is a 570-amino-acid chain: Zeta-carotene desaturase, chloroplastic/chromoplastic (570 aa).

Positions 1-16 (MASVAATTTLAPALAP) are enriched in low complexity. Positions 1-33 (MASVAATTTLAPALAPRRARPGTGLVPPRRASA) are disordered.

Belongs to the zeta carotene desaturase family. Requires NAD(+) as cofactor. NADP(+) serves as cofactor. The cofactor is FAD.

The protein localises to the plastid. It is found in the chloroplast. It localises to the chromoplast. It carries out the reaction 9,9'-di-cis-zeta-carotene + 2 a quinone = 7,7',9,9'-tetra-cis-lycopene + 2 a quinol. It functions in the pathway carotenoid biosynthesis; lycopene biosynthesis. Functionally, catalyzes the conversion of zeta-carotene to lycopene via the intermediary of neurosporene. It carries out two consecutive desaturations (introduction of double bonds) at positions C-7 and C-7'. In Zea mays (Maize), this protein is Zeta-carotene desaturase, chloroplastic/chromoplastic (ZDS1).